Here is a 132-residue protein sequence, read N- to C-terminus: Ribosome-binding factor A (132 aa).

This sequence belongs to the RbfA family. Monomer. Binds 30S ribosomal subunits, but not 50S ribosomal subunits or 70S ribosomes.

The protein resides in the cytoplasm. Its function is as follows. One of several proteins that assist in the late maturation steps of the functional core of the 30S ribosomal subunit. Associates with free 30S ribosomal subunits (but not with 30S subunits that are part of 70S ribosomes or polysomes). Required for efficient processing of 16S rRNA. May interact with the 5'-terminal helix region of 16S rRNA. The sequence is that of Ribosome-binding factor A from Xanthomonas campestris pv. campestris (strain 8004).